Reading from the N-terminus, the 380-residue chain is Crotonobetainyl-CoA reductase (380 aa).

Belongs to the acyl-CoA dehydrogenase family. As to quaternary structure, homotetramer. It depends on FAD as a cofactor.

The protein localises to the cytoplasm. The catalysed reaction is 4-(trimethylamino)butanoyl-CoA + oxidized [electron-transfer flavoprotein] + H(+) = crotonobetainyl-CoA + reduced [electron-transfer flavoprotein]. Its pathway is amine and polyamine metabolism; carnitine metabolism. Catalyzes the reduction of crotonobetainyl-CoA to gamma-butyrobetainyl-CoA. This is Crotonobetainyl-CoA reductase from Salmonella typhi.